A 412-amino-acid chain; its full sequence is Protein translocase subunit SecY (412 aa).

The next 9 membrane-spanning stretches (helical) occupy residues 17–37 (IFLTIGLLVLSRLGTFIPVPG), 58–78 (IFSGGGFASIGIFALGIVPYI), 117–137 (ALGWAAIQSLGVSFWVRPYVF), 143–163 (FVVQMTLALTTGSMLIMWFSE), 170–190 (IGNGPSLLIFINIIAGLPKLI), 251–271 (VMPIIFASAILVLPAYLGQVI), 293–313 (YLIFYFSLILFFSYFYASLII), 350–370 (TFLGALFLAFIAVVPSIIENI), and 372–392 (SISTFKGLGATSLLILVGVAI).

It belongs to the SecY/SEC61-alpha family. As to quaternary structure, component of the plastid Sec protein translocase complex, which is composed of at least SecY and SecE.

Its subcellular location is the plastid. It is found in the chloroplast thylakoid membrane. Its function is as follows. The central subunit of the protein translocation channel SecYE. Consists of two halves formed by TMs 1-5 and 6-10. These two domains form a lateral gate at the front which open onto the bilayer between TMs 2 and 7, and are clamped together by SecE at the back. The channel is closed by both a pore ring composed of hydrophobic SecY resides and a short helix (helix 2A) on the extracellular side of the membrane which forms a plug. This chain is Protein translocase subunit SecY, found in Pyrenomonas salina.